A 382-amino-acid chain; its full sequence is Mannitol-1-phosphate 5-dehydrogenase (382 aa).

3 to 14 (ALHFGAGNIGRG) provides a ligand contact to NAD(+).

This sequence belongs to the mannitol dehydrogenase family.

It catalyses the reaction D-mannitol 1-phosphate + NAD(+) = beta-D-fructose 6-phosphate + NADH + H(+). In Klebsiella pneumoniae, this protein is Mannitol-1-phosphate 5-dehydrogenase (mtlD).